The primary structure comprises 516 residues: MAMSPAAPLSVTELLLVSAVFCLVFWAVRASRPKVPKGLKRLPGPWGWPLLGHLLTLGKNPHVALARLSRRYGDVFQIRLGSTPVVVLSGLDTIKQALVRQGDDFKGRPDLYSSSFITEGQSMTFSPDSGPVWAARRRLAQDSLKSFSIASNPASSSSCYLEEHVSQEAENLIGRFQELMAAVGRFDPYSQLVVSAARVIGAMCFGRRFPQGSEEMLDVVRNSSKFVETASSGSPVDFFPILRYLPNRPLQRFKDFNQRFLRFLQKTVREHYEDFDRNSIQDITGALFKHSEKNSKANSGLIPQEKIVNLVNDIFGAGFDTITTALSWSLMYLVTNPRRQRKIQEELDAVVGRARQPRLSDRPQLPYLEAFILELFRHTSFVPFTIPHSTTRDTTLNGFHIPKECCIFINQWQINHDPQLWGDPEEFRPERFLTADGAAINKPLSEKVTLFGLGKRRCIGETLARWEVFLFLAILLQRLEFSVPPGVPVDLTPIYGLTMKHPRCEHVQARPRFSDQ.

S69 is a glycosylation site (O-linked (GlcNAc) serine). Residues F226 and 361–365 contribute to the substrate site; that span reads DRPQL. C458 lines the heme pocket.

The protein belongs to the cytochrome P450 family. As to quaternary structure, interacts with PGRMC1; the interaction requires PGRMC1 homodimerization. The cofactor is heme.

The protein localises to the endoplasmic reticulum membrane. It localises to the microsome membrane. It catalyses the reaction an organic molecule + reduced [NADPH--hemoprotein reductase] + O2 = an alcohol + oxidized [NADPH--hemoprotein reductase] + H2O + H(+). The catalysed reaction is 17beta-estradiol + reduced [NADPH--hemoprotein reductase] + O2 = 2-hydroxy-17beta-estradiol + oxidized [NADPH--hemoprotein reductase] + H2O + H(+). The enzyme catalyses 17beta-estradiol + reduced [NADPH--hemoprotein reductase] + O2 = 4-hydroxy-17beta-estradiol + oxidized [NADPH--hemoprotein reductase] + H2O + H(+). It carries out the reaction estrone + reduced [NADPH--hemoprotein reductase] + O2 = 2-hydroxyestrone + oxidized [NADPH--hemoprotein reductase] + H2O + H(+). It catalyses the reaction estrone + reduced [NADPH--hemoprotein reductase] + O2 = 4-hydroxyestrone + oxidized [NADPH--hemoprotein reductase] + H2O + H(+). The catalysed reaction is cholesterol + reduced [NADPH--hemoprotein reductase] + O2 = 25-hydroxycholesterol + oxidized [NADPH--hemoprotein reductase] + H2O + H(+). The enzyme catalyses all-trans-retinol + reduced [NADPH--hemoprotein reductase] + O2 = all-trans-retinal + oxidized [NADPH--hemoprotein reductase] + 2 H2O + H(+). It carries out the reaction all-trans-retinal + reduced [NADPH--hemoprotein reductase] + O2 = all-trans-retinoate + oxidized [NADPH--hemoprotein reductase] + H2O + 2 H(+). It catalyses the reaction (5Z,8Z,11Z,14Z)-eicosatetraenoate + reduced [NADPH--hemoprotein reductase] + O2 = (14R,15S)-epoxy-(5Z,8Z,11Z)-eicosatrienoate + oxidized [NADPH--hemoprotein reductase] + H2O + H(+). The catalysed reaction is (5Z,8Z,11Z,14Z)-eicosatetraenoate + reduced [NADPH--hemoprotein reductase] + O2 = (14S,15R)-epoxy-(5Z,8Z,11Z)-eicosatrienoate + oxidized [NADPH--hemoprotein reductase] + H2O + H(+). The enzyme catalyses (5Z,8Z,11Z,14Z,17Z)-eicosapentaenoate + reduced [NADPH--hemoprotein reductase] + O2 = (17R,18S)-epoxy-(5Z,8Z,11Z,14Z)-eicosatetraenoate + oxidized [NADPH--hemoprotein reductase] + H2O + H(+). It carries out the reaction (4Z,7Z,10Z,13Z,16Z,19Z)-docosahexaenoate + reduced [NADPH--hemoprotein reductase] + O2 = (19R,20S)-epoxy-(4Z,7Z,10Z,13Z,16Z)-docosapentaenoate + oxidized [NADPH--hemoprotein reductase] + H2O + H(+). It catalyses the reaction (5S)-hydroperoxy-(6E,8Z,11Z,14Z)-eicosatetraenoate = 5-oxo-(6E,8Z,11Z,14Z)-eicosatetraenoate + H2O. The catalysed reaction is (12S)-hydroperoxy-(5Z,8Z,10E,14Z)-eicosatetraenoate = 12-oxo-(5Z,8Z,10E,14Z)-eicosatetraenoate + H2O. The enzyme catalyses (15S)-hydroperoxy-(5Z,8Z,11Z,13E)-eicosatetraenoate = 15-oxo-(5Z,8Z,11Z,13E)-eicosatetraenoate + H2O. It carries out the reaction (13S)-hydroperoxy-(9Z,11E)-octadecadienoate = 13-oxo-(9Z,11E)-octadecadienoate + H2O. It catalyses the reaction (5Z,8Z,11Z,14Z)-eicosatetraenoate + reduced [NADPH--hemoprotein reductase] + O2 = 13-hydroxy-(5Z,8Z,11Z,14Z)-eicosatetraenoate + oxidized [NADPH--hemoprotein reductase] + H2O + H(+). The catalysed reaction is (5Z,8Z,11Z,14Z)-eicosatetraenoate + reduced [NADPH--hemoprotein reductase] + O2 = 19-hydroxy-(5Z,8Z,11Z,14Z)-eicosatetraenoate + oxidized [NADPH--hemoprotein reductase] + H2O + H(+). The enzyme catalyses (9Z,12Z)-octadecadienoate + reduced [NADPH--hemoprotein reductase] + O2 = 11-hydroxy-(9Z,12Z)-octadecadienoate + oxidized [NADPH--hemoprotein reductase] + H2O + H(+). The protein operates within cofactor metabolism; retinol metabolism. It functions in the pathway steroid metabolism; cholesterol metabolism. It participates in lipid metabolism; arachidonate metabolism. In terms of biological role, a cytochrome P450 monooxygenase involved in the metabolism of various endogenous substrates, including fatty acids, steroid hormones and vitamins. Mechanistically, uses molecular oxygen inserting one oxygen atom into a substrate, and reducing the second into a water molecule, with two electrons provided by NADPH via cytochrome P450 reductase (NADPH--hemoprotein reductase). Catalyzes the hydroxylation of carbon-hydrogen bonds. Exhibits high catalytic activity for the formation of hydroxyestrogens from estrone (E1) and 17beta-estradiol (E2), namely 2-hydroxy E1 and E2. Metabolizes cholesterol toward 25-hydroxycholesterol, a physiological regulator of cellular cholesterol homeostasis. May act as a major enzyme for all-trans retinoic acid biosynthesis in the liver. Catalyzes two successive oxidative transformation of all-trans retinol to all-trans retinal and then to the active form all-trans retinoic acid. Primarily catalyzes stereoselective epoxidation of the last double bond of polyunsaturated fatty acids (PUFA), displaying a strong preference for the (R,S) stereoisomer. Catalyzes bisallylic hydroxylation and omega-1 hydroxylation of PUFA. May also participate in eicosanoids metabolism by converting hydroperoxide species into oxo metabolites (lipoxygenase-like reaction, NADPH-independent). Plays a role in the oxidative metabolism of xenobiotics. Catalyzes the N-hydroxylation of heterocyclic amines and the O-deethylation of phenacetin. Metabolizes caffeine via N3-demethylation. The protein is Cytochrome P450 1A2 (CYP1A2) of Oryctolagus cuniculus (Rabbit).